We begin with the raw amino-acid sequence, 102 residues long: Large ribosomal subunit protein bL21 (102 aa).

This sequence belongs to the bacterial ribosomal protein bL21 family. As to quaternary structure, part of the 50S ribosomal subunit. Contacts protein L20.

Functionally, this protein binds to 23S rRNA in the presence of protein L20. The sequence is that of Large ribosomal subunit protein bL21 from Phytoplasma mali (strain AT).